Here is a 308-residue protein sequence, read N- to C-terminus: Porphobilinogen deaminase (308 aa).

Cys-241 is modified (S-(dipyrrolylmethanemethyl)cysteine).

The protein belongs to the HMBS family. As to quaternary structure, monomer. It depends on dipyrromethane as a cofactor.

The enzyme catalyses 4 porphobilinogen + H2O = hydroxymethylbilane + 4 NH4(+). Its pathway is porphyrin-containing compound metabolism; protoporphyrin-IX biosynthesis; coproporphyrinogen-III from 5-aminolevulinate: step 2/4. Tetrapolymerization of the monopyrrole PBG into the hydroxymethylbilane pre-uroporphyrinogen in several discrete steps. The protein is Porphobilinogen deaminase of Staphylococcus aureus (strain bovine RF122 / ET3-1).